The following is an 801-amino-acid chain: Probable inorganic carbon transporter subunit DabA (801 aa).

Positions 330, 332, 489, and 504 each coordinate Zn(2+).

The protein belongs to the inorganic carbon transporter (TC 9.A.2) DabA family. As to quaternary structure, forms a complex with DabB. The cofactor is Zn(2+).

The protein resides in the cell inner membrane. Functionally, part of an energy-coupled inorganic carbon pump. The protein is Probable inorganic carbon transporter subunit DabA of Jannaschia sp. (strain CCS1).